Here is a 561-residue protein sequence, read N- to C-terminus: Arginine--tRNA ligase (561 aa).

The 'HIGH' region motif lies at 128 to 138 (ANPTGPLHVGH).

It belongs to the class-I aminoacyl-tRNA synthetase family. Monomer.

It localises to the cytoplasm. The enzyme catalyses tRNA(Arg) + L-arginine + ATP = L-arginyl-tRNA(Arg) + AMP + diphosphate. In Marinobacter nauticus (strain ATCC 700491 / DSM 11845 / VT8) (Marinobacter aquaeolei), this protein is Arginine--tRNA ligase.